The primary structure comprises 321 residues: tRNA-dihydrouridine synthase B (321 aa).

FMN-binding positions include 16–18 and Gln70; that span reads PMA. Catalysis depends on Cys100, which acts as the Proton donor. FMN contacts are provided by residues Lys139, 200–202, and 224–225; these read NGD and GR.

This sequence belongs to the Dus family. DusB subfamily. The cofactor is FMN.

It catalyses the reaction a 5,6-dihydrouridine in tRNA + NAD(+) = a uridine in tRNA + NADH + H(+). The catalysed reaction is a 5,6-dihydrouridine in tRNA + NADP(+) = a uridine in tRNA + NADPH + H(+). Catalyzes the synthesis of 5,6-dihydrouridine (D), a modified base found in the D-loop of most tRNAs, via the reduction of the C5-C6 double bond in target uridines. The polypeptide is tRNA-dihydrouridine synthase B (Yersinia pestis).